Reading from the N-terminus, the 206-residue chain is ATP-dependent dethiobiotin synthetase BioD (206 aa).

12–17 (DSGKTL) lines the ATP pocket. Threonine 16 is a Mg(2+) binding site. Lysine 32 is an active-site residue. Position 99 (glutamate 99) interacts with Mg(2+). 99–102 (EGAG) contributes to the ATP binding site.

This sequence belongs to the dethiobiotin synthetase family. Homodimer. The cofactor is Mg(2+).

It localises to the cytoplasm. The catalysed reaction is (7R,8S)-7,8-diammoniononanoate + CO2 + ATP = (4R,5S)-dethiobiotin + ADP + phosphate + 3 H(+). It functions in the pathway cofactor biosynthesis; biotin biosynthesis; biotin from 7,8-diaminononanoate: step 1/2. In terms of biological role, catalyzes a mechanistically unusual reaction, the ATP-dependent insertion of CO2 between the N7 and N8 nitrogen atoms of 7,8-diaminopelargonic acid (DAPA, also called 7,8-diammoniononanoate) to form a ureido ring. In Cytophaga hutchinsonii (strain ATCC 33406 / DSM 1761 / CIP 103989 / NBRC 15051 / NCIMB 9469 / D465), this protein is ATP-dependent dethiobiotin synthetase BioD.